A 292-amino-acid chain; its full sequence is Tissue factor (292 aa).

Positions 1–32 (MAPPTRLQVPRPGTAVPYTVLLGWLLAQVARA) are cleaved as a signal peptide. The Extracellular segment spans residues 33-250 (ADTTGRAYNL…SREQGRAREM (218 aa)). 2 consecutive Fibronectin type-III domains span residues 35–126 (TTGR…PFRN) and 148–240 (QVGT…TECT). Residue Asn-41 is glycosylated (N-linked (GlcNAc...) asparagine). Short sequence motifs (WKS motif) lie at residues 44-46 (WKS) and 75-77 (WKS). An intrachain disulfide couples Cys-79 to Cys-87. 4 N-linked (GlcNAc...) asparagine glycosylation sites follow: Asn-114, Asn-154, Asn-167, and Asn-182. Residues Cys-216 and Cys-239 are joined by a disulfide bond. A helical membrane pass occupies residues 251-271 (FFIIGAVVVVALLIIVLSVTV). The Cytoplasmic portion of the chain corresponds to 272–292 (YKCRKARAGPSGKESSPLNIA). Cys-274 carries the S-palmitoyl cysteine lipid modification.

This sequence belongs to the tissue factor family. In terms of assembly, interacts with HSPE; the interaction, inhibited by heparin, promotes the generation of activated factor X and activates coagulation in the presence of activated factor VII. In terms of tissue distribution, brain, heart.

Its subcellular location is the membrane. Its function is as follows. Initiates blood coagulation by forming a complex with circulating factor VII or VIIa. The [TF:VIIa] complex activates factors IX or X by specific limited proteolysis. TF plays a role in normal hemostasis by initiating the cell-surface assembly and propagation of the coagulation protease cascade. The sequence is that of Tissue factor (F3) from Oryctolagus cuniculus (Rabbit).